The following is a 260-amino-acid chain: Uridylate kinase (260 aa).

29–32 (KLSG) provides a ligand contact to ATP. The tract at residues 37-42 (GDLGYG) is involved in allosteric activation by GTP. Residue glycine 71 participates in UMP binding. ATP-binding residues include glycine 72 and arginine 76. Residues aspartate 91 and 152–159 (SGNPFFTT) contribute to the UMP site. ATP is bound by residues threonine 179, tyrosine 185, and aspartate 188.

It belongs to the UMP kinase family. Homohexamer.

The protein resides in the cytoplasm. It catalyses the reaction UMP + ATP = UDP + ADP. The protein operates within pyrimidine metabolism; CTP biosynthesis via de novo pathway; UDP from UMP (UMPK route): step 1/1. Allosterically activated by GTP. Inhibited by UTP. Catalyzes the reversible phosphorylation of UMP to UDP. The sequence is that of Uridylate kinase from Synechocystis sp. (strain ATCC 27184 / PCC 6803 / Kazusa).